The following is a 310-amino-acid chain: DnaJ-like protein MG002 (310 aa).

Residues 1 to 66 (MNLYDLLELP…KEKYDSMLKV (66 aa)) form the J domain.

In Mycoplasma genitalium (strain ATCC 33530 / DSM 19775 / NCTC 10195 / G37) (Mycoplasmoides genitalium), this protein is DnaJ-like protein MG002.